A 120-amino-acid chain; its full sequence is Ribosome-binding factor A (120 aa).

This sequence belongs to the RbfA family. Monomer. Binds 30S ribosomal subunits, but not 50S ribosomal subunits or 70S ribosomes.

The protein resides in the cytoplasm. In terms of biological role, one of several proteins that assist in the late maturation steps of the functional core of the 30S ribosomal subunit. Associates with free 30S ribosomal subunits (but not with 30S subunits that are part of 70S ribosomes or polysomes). Required for efficient processing of 16S rRNA. May interact with the 5'-terminal helix region of 16S rRNA. In Chlamydia caviae (strain ATCC VR-813 / DSM 19441 / 03DC25 / GPIC) (Chlamydophila caviae), this protein is Ribosome-binding factor A.